Reading from the N-terminus, the 182-residue chain is Gas vesicle protein H1 (182 aa).

Acidic residues predominate over residues 1-11; that stretch reads MVPDENDDASD. 2 disordered regions span residues 1–21 and 65–106; these read MVPD…SGLL and GRAD…GGTS. Residues 12–21 show a composition bias toward low complexity; it reads DQSSQLSGLL. Residues 92 to 101 show a composition bias toward basic and acidic residues; that stretch reads TTEDSIHVET.

Belongs to the gas vesicle GvpH family. GvpF to GvpM interact with each other in vitro, and may form multi-subunit complex(es). Interacts with GvpC1. Might interact with GvpA1.

It localises to the cytoplasm. The protein resides in the gas vesicle. Its function is as follows. Proteins GvpF to GvpM might be involved in nucleating gas vesicle formation. May be important for the stability of gas vesicles. Gas vesicles are hollow, gas filled proteinaceous nanostructures found in several microbial planktonic microorganisms. They allow positioning of halobacteria at the optimal depth for growth in the poorly aerated, shallow brine pools of their habitat. Functionally, expression of a 9.5 kb p-vac DNA fragment containing 2 divergently transcribed regions (gvpD-gvpE-gvpF-gvpG-gvpH-gvpI-gvpJ-gvpK-gvpL-gvpM and gvpA-gvpC-gvpN-gvpO) allows H.volcanii to produce gas vesicles. A similar region restores gas vesicle production in H.halobium without the p-vac locus, but it still has the c-vac locus. This chain is Gas vesicle protein H1 (gvpH11), found in Halobacterium salinarum (strain ATCC 700922 / JCM 11081 / NRC-1) (Halobacterium halobium).